Here is a 475-residue protein sequence, read N- to C-terminus: Protein ABCI7, chloroplastic (475 aa).

Residues 1 to 36 (MAAATVLGRLSLIPNLSSKPKLKSNRRTTSTSVSVR) constitute a chloroplast transit peptide.

Interacts with NAP7.

The protein localises to the plastid. The protein resides in the chloroplast. The sequence is that of Protein ABCI7, chloroplastic (ABCI7) from Arabidopsis thaliana (Mouse-ear cress).